A 336-amino-acid chain; its full sequence is Ketol-acid reductoisomerase (NADP(+)) (336 aa).

In terms of domain architecture, KARI N-terminal Rossmann spans 3–183; that stretch reads AKMYYDRDVD…GCTKAGVLET (181 aa). NADP(+) contacts are provided by residues 26 to 29, R49, S52, S54, and 84 to 87; these read YGSQ and DEQQ. H109 is a catalytic residue. G135 is a binding site for NADP(+). Residues 184–329 form the KARI C-terminal knotted domain; it reads TFKEETETDL…KELRDQMPFI (146 aa). D192, E196, E228, and E232 together coordinate Mg(2+). S253 provides a ligand contact to substrate.

The protein belongs to the ketol-acid reductoisomerase family. Mg(2+) is required as a cofactor.

The enzyme catalyses (2R)-2,3-dihydroxy-3-methylbutanoate + NADP(+) = (2S)-2-acetolactate + NADPH + H(+). It catalyses the reaction (2R,3R)-2,3-dihydroxy-3-methylpentanoate + NADP(+) = (S)-2-ethyl-2-hydroxy-3-oxobutanoate + NADPH + H(+). It participates in amino-acid biosynthesis; L-isoleucine biosynthesis; L-isoleucine from 2-oxobutanoate: step 2/4. Its pathway is amino-acid biosynthesis; L-valine biosynthesis; L-valine from pyruvate: step 2/4. Involved in the biosynthesis of branched-chain amino acids (BCAA). Catalyzes an alkyl-migration followed by a ketol-acid reduction of (S)-2-acetolactate (S2AL) to yield (R)-2,3-dihydroxy-isovalerate. In the isomerase reaction, S2AL is rearranged via a Mg-dependent methyl migration to produce 3-hydroxy-3-methyl-2-ketobutyrate (HMKB). In the reductase reaction, this 2-ketoacid undergoes a metal-dependent reduction by NADPH to yield (R)-2,3-dihydroxy-isovalerate. This Deinococcus radiodurans (strain ATCC 13939 / DSM 20539 / JCM 16871 / CCUG 27074 / LMG 4051 / NBRC 15346 / NCIMB 9279 / VKM B-1422 / R1) protein is Ketol-acid reductoisomerase (NADP(+)).